Reading from the N-terminus, the 362-residue chain is Bifunctional chorismate mutase/prephenate dehydratase (362 aa).

The 92-residue stretch at 1-92 folds into the Chorismate mutase domain; it reads MEELKELRKE…ACLSLEKKIK (92 aa). Substrate contacts are provided by R8, R25, K36, and E49. Positions 93-267 constitute a Prephenate dehydratase domain; it reads VAYLGPKATF…NFTRFLVIAK (175 aa). Residues 279–356 enclose the ACT domain; that stretch reads SILFGVKDEP…QFLKVLGSYP (78 aa).

The protein localises to the cytoplasm. It carries out the reaction chorismate = prephenate. The enzyme catalyses prephenate + H(+) = 3-phenylpyruvate + CO2 + H2O. The protein operates within amino-acid biosynthesis; L-phenylalanine biosynthesis; phenylpyruvate from prephenate: step 1/1. Its pathway is metabolic intermediate biosynthesis; prephenate biosynthesis; prephenate from chorismate: step 1/1. Functionally, catalyzes the Claisen rearrangement of chorismate to prephenate and the decarboxylation/dehydration of prephenate to phenylpyruvate. This Aquifex aeolicus (strain VF5) protein is Bifunctional chorismate mutase/prephenate dehydratase (pheA).